An 876-amino-acid polypeptide reads, in one-letter code: ATPase WRNIP1 (876 aa).

2 stretches are compositionally biased toward low complexity: residues 56 to 85 (NKSNGNNSINNNNNNKNTPTKPNLNLTPTK) and 104 to 175 (NNNN…INNN). A disordered region spans residues 56 to 175 (NKSNGNNSIN…NNNNNNINNN (120 aa)). An ATP-binding site is contributed by 240-246 (PGCGKTT). 3 disordered regions span residues 621 to 647 (KDRQQSQDQTQRSSQQQQQQQTQPQQQ), 714 to 737 (INNKNNDSNIIKKNVNNSLDLNPT), and 833 to 876 (ETKA…SLDF). 2 stretches are compositionally biased toward low complexity: residues 626–647 (SQDQTQRSSQQQQQQQTQPQQQ) and 714–731 (INNKNNDSNIIKKNVNNS). Positions 835–849 (KAISSTDTKESVSIN) are enriched in polar residues. The span at 850 to 863 (DSDKDLTTTHKNEQ) shows a compositional bias: basic and acidic residues.

This sequence belongs to the AAA ATPase family. RarA/MGS1/WRNIP1 subfamily.

It is found in the nucleus. It catalyses the reaction ATP + H2O = ADP + phosphate + H(+). In terms of biological role, functions as a modulator for initiation or reinitiation events during DNA polymerase delta-mediated DNA synthesis. Has an intrinsic ATPase activity that functions as a sensor of DNA damage or of arrested replication forks and regulates the extent of DNA synthesis. This is ATPase WRNIP1 from Dictyostelium discoideum (Social amoeba).